Reading from the N-terminus, the 582-residue chain is 2-succinyl-5-enolpyruvyl-6-hydroxy-3-cyclohexene-1-carboxylate synthase (582 aa).

It belongs to the TPP enzyme family. MenD subfamily. As to quaternary structure, homodimer. Mg(2+) serves as cofactor. It depends on Mn(2+) as a cofactor. Requires thiamine diphosphate as cofactor.

The catalysed reaction is isochorismate + 2-oxoglutarate + H(+) = 5-enolpyruvoyl-6-hydroxy-2-succinyl-cyclohex-3-ene-1-carboxylate + CO2. It functions in the pathway quinol/quinone metabolism; 1,4-dihydroxy-2-naphthoate biosynthesis; 1,4-dihydroxy-2-naphthoate from chorismate: step 2/7. Its pathway is cofactor biosynthesis; phylloquinone biosynthesis. Catalyzes the thiamine diphosphate-dependent decarboxylation of 2-oxoglutarate and the subsequent addition of the resulting succinic semialdehyde-thiamine pyrophosphate anion to isochorismate to yield 2-succinyl-5-enolpyruvyl-6-hydroxy-3-cyclohexene-1-carboxylate (SEPHCHC). In Prochlorococcus marinus (strain MIT 9313), this protein is 2-succinyl-5-enolpyruvyl-6-hydroxy-3-cyclohexene-1-carboxylate synthase.